Here is a 239-residue protein sequence, read N- to C-terminus: Fatty acid metabolism regulator protein (239 aa).

In terms of domain architecture, HTH gntR-type spans 6-74 (QSPAGFAEEY…HGKPTKVNNF (69 aa)). The H-T-H motif DNA-binding region spans 34-53 (ERELSELIGVTRTTLREVLQ).

In terms of assembly, homodimer.

It localises to the cytoplasm. In terms of biological role, multifunctional regulator of fatty acid metabolism. In Shigella flexneri, this protein is Fatty acid metabolism regulator protein.